The chain runs to 101 residues: Urease subunit beta (101 aa).

It belongs to the urease beta subunit family. As to quaternary structure, heterotrimer of UreA (gamma), UreB (beta) and UreC (alpha) subunits. Three heterotrimers associate to form the active enzyme.

It localises to the cytoplasm. It carries out the reaction urea + 2 H2O + H(+) = hydrogencarbonate + 2 NH4(+). It functions in the pathway nitrogen metabolism; urea degradation; CO(2) and NH(3) from urea (urease route): step 1/1. In Bradyrhizobium diazoefficiens (strain JCM 10833 / BCRC 13528 / IAM 13628 / NBRC 14792 / USDA 110), this protein is Urease subunit beta.